Consider the following 247-residue polypeptide: tRNA pseudouridine synthase A (247 aa).

The active-site Nucleophile is aspartate 53. Tyrosine 112 contacts substrate.

It belongs to the tRNA pseudouridine synthase TruA family. As to quaternary structure, homodimer.

The catalysed reaction is uridine(38/39/40) in tRNA = pseudouridine(38/39/40) in tRNA. Its function is as follows. Formation of pseudouridine at positions 38, 39 and 40 in the anticodon stem and loop of transfer RNAs. This Anaplasma marginale (strain Florida) protein is tRNA pseudouridine synthase A.